Here is a 221-residue protein sequence, read N- to C-terminus: MELTLHEARVIGCLLEKEITTPEQYPLSLNALTLACNQKTSREPVLDLSEAQVQDALDSLTKKRLISEQSGFGSRVVKYKHRFCNTEFSELQLSPAAVAIVCLLLLRGPQTPGELRTRSNRLHEFKDVIEVEDCIKQLISRTKPILKQLPREPGRRESRYVELFSETSANVVTTSDHTDKPHIPPVAALVEHGALVARVTELEQHVATLTQKFDELIASLT.

This sequence belongs to the UPF0502 family.

This is UPF0502 protein Sputcn32_1644 from Shewanella putrefaciens (strain CN-32 / ATCC BAA-453).